Here is a 400-residue protein sequence, read N- to C-terminus: Coiled-coil domain-containing glutamate-rich protein 1 (400 aa).

The segment covering 1–11 (MTQTVNEREDP) has biased composition (basic and acidic residues). Disordered regions lie at residues 1–68 (MTQT…IPGP), 134–164 (RPPG…PPID), and 203–353 (QEKL…DKFL). Positions 31–45 (YHRRQRGAPMSKRRY) are enriched in basic residues. Basic and acidic residues predominate over residues 46-57 (RDGPKTEYEAPR). A compositionally biased stretch (basic residues) spans 137–157 (GRKKRWGRRGRGLRRHPRRSF). Residues 209–220 (QQAALRAHQAQA) show a composition bias toward low complexity. Residues 255–271 (PSLTFSPAPGQQNQSPT) are compositionally biased toward polar residues. Over residues 275–347 (VEEEEKNVDD…EAGLEEGEQR (73 aa)) the composition is skewed to acidic residues. Residues 299–335 (EEEEVDGESEDEDVDEEEVEEAGNGEEREEDQEEEDV) are a coiled coil.

It localises to the nucleus. Regulator of histone epigenetic modifications and chromatin compaction into the sperm head, required for histone-to-protamine (HTP) transition. HTP is a key event in which somatic histones are first replaced by testis-specific histone variants, then transition proteins (TNPs) are incorporated into the spermatid nucleus, and finally protamines (PRMs) replace the TNPs to promote chromatin condensation. The sequence is that of Coiled-coil domain-containing glutamate-rich protein 1 (Ccer1) from Rattus norvegicus (Rat).